Reading from the N-terminus, the 225-residue chain is Platelet-activating factor acetylhydrolase IB subunit beta homolog (225 aa).

The protein belongs to the 'GDSL' lipolytic enzyme family. Platelet-activating factor acetylhydrolase IB beta/gamma subunits subfamily. Does not interact with Lis-1.

The sequence is that of Platelet-activating factor acetylhydrolase IB subunit beta homolog (Paf-AHalpha) from Drosophila melanogaster (Fruit fly).